We begin with the raw amino-acid sequence, 257 residues long: Imidazole glycerol phosphate synthase subunit HisF (257 aa).

Catalysis depends on residues D12 and D131.

It belongs to the HisA/HisF family. In terms of assembly, heterodimer of HisH and HisF.

It is found in the cytoplasm. The catalysed reaction is 5-[(5-phospho-1-deoxy-D-ribulos-1-ylimino)methylamino]-1-(5-phospho-beta-D-ribosyl)imidazole-4-carboxamide + L-glutamine = D-erythro-1-(imidazol-4-yl)glycerol 3-phosphate + 5-amino-1-(5-phospho-beta-D-ribosyl)imidazole-4-carboxamide + L-glutamate + H(+). Its pathway is amino-acid biosynthesis; L-histidine biosynthesis; L-histidine from 5-phospho-alpha-D-ribose 1-diphosphate: step 5/9. Its function is as follows. IGPS catalyzes the conversion of PRFAR and glutamine to IGP, AICAR and glutamate. The HisF subunit catalyzes the cyclization activity that produces IGP and AICAR from PRFAR using the ammonia provided by the HisH subunit. This Marinomonas sp. (strain MWYL1) protein is Imidazole glycerol phosphate synthase subunit HisF.